A 665-amino-acid chain; its full sequence is Secreted LysM effector Lys3 (665 aa).

Positions 1 to 19 (MLWLTVSLTGFALLGVVAA) are cleaved as a signal peptide. N-linked (GlcNAc...) asparagine glycans are attached at residues N43 and N153. LysM domains follow at residues 166-211 (RTYT…TLCL), 216-264 (TLRK…YICI), and 303-349 (KWYV…AYCV). An N-linked (GlcNAc...) asparagine glycan is attached at N234. The N-linked (GlcNAc...) asparagine glycan is linked to N398. The LysM 4 domain occupies 409 to 454 (SWSDAAKLNSCSFIAHINGVTVSQLLQWNPSLSKDSCSLSRELYYC). N-linked (GlcNAc...) asparagine glycosylation is present at N531. The disordered stretch occupies residues 585–610 (SSVSMTNSAPATATSTGGPPAPTQDG). The span at 592–602 (SAPATATSTGG) shows a compositional bias: low complexity. N614 carries N-linked (GlcNAc...) asparagine glycosylation. The LysM 5 domain occupies 617 to 663 (KWHVVESGDGCWAIYTKYGITSDQLFEWNTKISKDCSNIWLGYAVCV).

The protein belongs to the secreted LysM effector family.

In terms of biological role, might have a role in sequestration of chitin oligosaccharides (breakdown products of fungal cell walls that are released during invasion and act as triggers of host immunity) to dampen host defense. This chain is Secreted LysM effector Lys3, found in Pochonia chlamydosporia (strain 123) (Metacordyceps chlamydosporia).